The chain runs to 372 residues: Queuine tRNA-ribosyltransferase (372 aa).

The Proton acceptor role is filled by D92. Residues 92–96, D146, Q188, and G215 each bind substrate; that span reads DSGGF. Positions 246–252 are RNA binding; it reads GIGTLRE. D265 (nucleophile) is an active-site residue. An RNA binding; important for wobble base 34 recognition region spans residues 270 to 274; it reads TRLGR. The Zn(2+) site is built by C303, C305, C308, and H334.

This sequence belongs to the queuine tRNA-ribosyltransferase family. In terms of assembly, homodimer. Within each dimer, one monomer is responsible for RNA recognition and catalysis, while the other monomer binds to the replacement base PreQ1. Zn(2+) serves as cofactor.

The enzyme catalyses 7-aminomethyl-7-carbaguanine + guanosine(34) in tRNA = 7-aminomethyl-7-carbaguanosine(34) in tRNA + guanine. Its pathway is tRNA modification; tRNA-queuosine biosynthesis. Catalyzes the base-exchange of a guanine (G) residue with the queuine precursor 7-aminomethyl-7-deazaguanine (PreQ1) at position 34 (anticodon wobble position) in tRNAs with GU(N) anticodons (tRNA-Asp, -Asn, -His and -Tyr). Catalysis occurs through a double-displacement mechanism. The nucleophile active site attacks the C1' of nucleotide 34 to detach the guanine base from the RNA, forming a covalent enzyme-RNA intermediate. The proton acceptor active site deprotonates the incoming PreQ1, allowing a nucleophilic attack on the C1' of the ribose to form the product. After dissociation, two additional enzymatic reactions on the tRNA convert PreQ1 to queuine (Q), resulting in the hypermodified nucleoside queuosine (7-(((4,5-cis-dihydroxy-2-cyclopenten-1-yl)amino)methyl)-7-deazaguanosine). The chain is Queuine tRNA-ribosyltransferase from Synechococcus sp. (strain CC9902).